The following is a 426-amino-acid chain: 3-phosphoshikimate 1-carboxyvinyltransferase (426 aa).

Residues lysine 22, serine 23, and arginine 27 each coordinate 3-phosphoshikimate. Residue lysine 22 participates in phosphoenolpyruvate binding. Positions 96 and 124 each coordinate phosphoenolpyruvate. Residues serine 170, serine 171, glutamine 172, serine 198, aspartate 314, asparagine 337, and lysine 341 each coordinate 3-phosphoshikimate. A phosphoenolpyruvate-binding site is contributed by glutamine 172. Aspartate 314 functions as the Proton acceptor in the catalytic mechanism. 3 residues coordinate phosphoenolpyruvate: arginine 345, arginine 387, and lysine 412.

It belongs to the EPSP synthase family. In terms of assembly, monomer.

It is found in the cytoplasm. It carries out the reaction 3-phosphoshikimate + phosphoenolpyruvate = 5-O-(1-carboxyvinyl)-3-phosphoshikimate + phosphate. The protein operates within metabolic intermediate biosynthesis; chorismate biosynthesis; chorismate from D-erythrose 4-phosphate and phosphoenolpyruvate: step 6/7. Catalyzes the transfer of the enolpyruvyl moiety of phosphoenolpyruvate (PEP) to the 5-hydroxyl of shikimate-3-phosphate (S3P) to produce enolpyruvyl shikimate-3-phosphate and inorganic phosphate. This chain is 3-phosphoshikimate 1-carboxyvinyltransferase, found in Shewanella sediminis (strain HAW-EB3).